Here is a 347-residue protein sequence, read N- to C-terminus: Selenide, water dikinase (347 aa).

The active site involves Cys17. Residues Lys20 and 48–50 (TRD) contribute to the ATP site. Asp51 is a Mg(2+) binding site. Residues Asp68, Asp91, and 139–141 (GHS) each bind ATP. Asp91 contributes to the Mg(2+) binding site. Asp227 contacts Mg(2+).

This sequence belongs to the selenophosphate synthase 1 family. Class I subfamily. As to quaternary structure, homodimer. It depends on Mg(2+) as a cofactor.

It carries out the reaction hydrogenselenide + ATP + H2O = selenophosphate + AMP + phosphate + 2 H(+). Functionally, synthesizes selenophosphate from selenide and ATP. The protein is Selenide, water dikinase of Enterobacter sp. (strain 638).